The following is a 442-amino-acid chain: UDP-N-acetylmuramoylalanine--D-glutamate ligase (442 aa).

Belongs to the MurCDEF family.

It localises to the cytoplasm. It catalyses the reaction UDP-N-acetyl-alpha-D-muramoyl-L-alanine + D-glutamate + ATP = UDP-N-acetyl-alpha-D-muramoyl-L-alanyl-D-glutamate + ADP + phosphate + H(+). Its pathway is cell wall biogenesis; peptidoglycan biosynthesis. Its function is as follows. Cell wall formation. Catalyzes the addition of glutamate to the nucleotide precursor UDP-N-acetylmuramoyl-L-alanine (UMA). This is UDP-N-acetylmuramoylalanine--D-glutamate ligase from Buchnera aphidicola subsp. Baizongia pistaciae (strain Bp).